An 852-amino-acid polypeptide reads, in one-letter code: Lon protease homolog 2, peroxisomal (852 aa).

Ser-2 is subject to N-acetylserine. The Lon N-terminal domain maps to 13 to 222; that stretch reads LPLLLTHEGV…MTIPLLVRQI (210 aa). 375–382 is an ATP binding site; the sequence is GPPGVGKT. The Lon proteolytic domain occupies 651–837; it reads LSQPGVAIGL…DEVLNAAFDG (187 aa). Active-site residues include Ser-743 and Lys-786. A Microbody targeting signal motif is present at residues 850-852; the sequence is SKL.

This sequence belongs to the peptidase S16 family. Interacts with PEX5. Interacts with TYSND1. May interact with enzymes involved in beta-oxidation of fatty acids, including ACOX1/AOX.

The protein localises to the peroxisome matrix. It catalyses the reaction Hydrolysis of proteins in presence of ATP.. In terms of biological role, ATP-dependent serine protease that mediates the selective degradation of misfolded and unassembled polypeptides in the peroxisomal matrix. Necessary for type 2 peroxisome targeting signal (PTS2)-containing protein processing and facilitates peroxisome matrix protein import. May indirectly regulate peroxisomal fatty acid beta-oxidation through degradation of the self-processed forms of TYSND1. This Pongo abelii (Sumatran orangutan) protein is Lon protease homolog 2, peroxisomal.